Consider the following 170-residue polypeptide: Shikimate kinase (170 aa).

ATP is bound at residue 11-16 (GAGKTT). Residue threonine 15 coordinates Mg(2+). Substrate is bound by residues aspartate 33, arginine 57, and glycine 80. Arginine 119 is an ATP binding site. Arginine 141 contributes to the substrate binding site.

This sequence belongs to the shikimate kinase family. Monomer. Requires Mg(2+) as cofactor.

It localises to the cytoplasm. It catalyses the reaction shikimate + ATP = 3-phosphoshikimate + ADP + H(+). It functions in the pathway metabolic intermediate biosynthesis; chorismate biosynthesis; chorismate from D-erythrose 4-phosphate and phosphoenolpyruvate: step 5/7. Functionally, catalyzes the specific phosphorylation of the 3-hydroxyl group of shikimic acid using ATP as a cosubstrate. This Azobacteroides pseudotrichonymphae genomovar. CFP2 protein is Shikimate kinase.